The sequence spans 162 residues: NADH-quinone oxidoreductase subunit I (162 aa).

2 consecutive 4Fe-4S ferredoxin-type domains span residues 53–83 (LRRY…IDSA) and 93–122 (TRYD…ETHI). 8 residues coordinate [4Fe-4S] cluster: Cys-63, Cys-66, Cys-69, Cys-73, Cys-102, Cys-105, Cys-108, and Cys-112.

It belongs to the complex I 23 kDa subunit family. NDH-1 is composed of 14 different subunits. Subunits NuoA, H, J, K, L, M, N constitute the membrane sector of the complex. [4Fe-4S] cluster is required as a cofactor.

The protein localises to the cell inner membrane. It catalyses the reaction a quinone + NADH + 5 H(+)(in) = a quinol + NAD(+) + 4 H(+)(out). NDH-1 shuttles electrons from NADH, via FMN and iron-sulfur (Fe-S) centers, to quinones in the respiratory chain. The immediate electron acceptor for the enzyme in this species is believed to be ubiquinone. Couples the redox reaction to proton translocation (for every two electrons transferred, four hydrogen ions are translocated across the cytoplasmic membrane), and thus conserves the redox energy in a proton gradient. The protein is NADH-quinone oxidoreductase subunit I of Xanthomonas oryzae pv. oryzae (strain MAFF 311018).